Consider the following 138-residue polypeptide: Protein NrdI (138 aa).

The protein belongs to the NrdI family.

Its function is as follows. Probably involved in ribonucleotide reductase function. The sequence is that of Protein NrdI from Paracoccus denitrificans (strain Pd 1222).